The chain runs to 282 residues: Endo-1,4-beta-xylanase B (282 aa).

The first 39 residues, 1–39 (MGISSILLSALIAGGALALPAAEPVSFDIRDENITLARR), serve as a signal peptide directing secretion. N33 carries N-linked (GlcNAc...) asparagine glycosylation. The 180-residue stretch at 40–219 (AEAINYNQDY…GSGSGQISLS (180 aa)) folds into the GH11 domain. E117 serves as the catalytic Nucleophile. The Proton donor role is filled by E206. The segment at 214 to 245 (GQISLSKGTGGGSTTTTPTGPTSTSTAPSSGG) is disordered. A compositionally biased stretch (low complexity) spans 227–243 (TTTTPTGPTSTSTAPSS). The CBM1 domain maps to 246 to 282 (TGAAQWGQCGGIGWTGPTTCVAPYTCKYENAYYSQCQ).

It belongs to the glycosyl hydrolase 11 (cellulase G) family.

It is found in the secreted. The enzyme catalyses Endohydrolysis of (1-&gt;4)-beta-D-xylosidic linkages in xylans.. Its pathway is glycan degradation; xylan degradation. With respect to regulation, significantly inhibited by the wheat xylanase inhibiting protein I (XIP-I) and the proteinaceous endoxylanase Triticum aestivum xylanase inhibitors I (TAXI-I), but not TAXI-II. In terms of biological role, endo-1,4-beta-xylanase involved in the hydrolysis of xylan, a major structural heterogeneous polysaccharide found in plant biomass representing the second most abundant polysaccharide in the biosphere, after cellulose. The protein is Endo-1,4-beta-xylanase B (xynB) of Talaromyces funiculosus (Fruitlet core rot fungus).